The sequence spans 421 residues: MSQLTEFISCIPVVNEEQNEEDERGLCKIQIEDGAMLETLDENSLSGLRIEKMLVSEGTGIFSKSSFGINDLRIFTGENIDEESKKYVWYELLKMLTGHKVYIASLDEKVVFTKWTCRMQDDEVWKVVMELESSAIIRKIAELTLHPVKKGEIDLFEMADKLYKDICCVNDSYRNIKESDSSNRNRVEQLARERELLDKLLETRDERTRAMMVTLLNEKKKKIRELHEILRQNNIKLSDDDVLDSALINTEVQKPISELNSPGKRMKRRKTVVEPQNLQKKLKDTSRRRANRKISNQSVIKMEDDDFDDFQFFGLSKRPIITAKDKLSEKYDDITSFGDDTQSISFESDSSSDVQKHLVSLEDNGIQISAGRSDEDYGDISGSESETDASAGEKKSSNHSEQSGNDREPCLQTESETDIET.

Residues 1-196 are interaction with NEJ1; the sequence is MSQLTEFISC…VEQLAREREL (196 aa). The interval 365–421 is disordered; that stretch reads GIQISAGRSDEDYGDISGSESETDASAGEKKSSNHSEQSGNDREPCLQTESETDIET. The segment covering 391–409 has biased composition (basic and acidic residues); the sequence is AGEKKSSNHSEQSGNDREP.

It belongs to the XRCC4-XLF family. XLF subfamily. As to quaternary structure, interacts with DNL4 (via BRCT domain). Interacts (via N-terminus) with NEJ1 (via C-terminus); the interaction is direct. The DNL4-LIF1 complex interacts with POL4.

It localises to the cytoplasm. The protein resides in the nucleus. Its function is as follows. Involved in non-homologous repair of DNA double-strand breaks. Stabilizes DNL4. The sequence is that of Non-homologous end-joining factor LIF1 (LIF1) from Saccharomyces cerevisiae (strain ATCC 204508 / S288c) (Baker's yeast).